The chain runs to 229 residues: Putative N-acetylmannosamine-6-phosphate 2-epimerase (229 aa).

Belongs to the NanE family.

It carries out the reaction an N-acyl-D-glucosamine 6-phosphate = an N-acyl-D-mannosamine 6-phosphate. It functions in the pathway amino-sugar metabolism; N-acetylneuraminate degradation; D-fructose 6-phosphate from N-acetylneuraminate: step 3/5. Functionally, converts N-acetylmannosamine-6-phosphate (ManNAc-6-P) to N-acetylglucosamine-6-phosphate (GlcNAc-6-P). The protein is Putative N-acetylmannosamine-6-phosphate 2-epimerase of Escherichia fergusonii (strain ATCC 35469 / DSM 13698 / CCUG 18766 / IAM 14443 / JCM 21226 / LMG 7866 / NBRC 102419 / NCTC 12128 / CDC 0568-73).